The sequence spans 441 residues: L-seryl-tRNA(Sec) selenium transferase (441 aa).

An N6-(pyridoxal phosphate)lysine modification is found at Lys283.

The protein belongs to the SelA family. Pyridoxal 5'-phosphate is required as a cofactor.

The protein localises to the cytoplasm. The catalysed reaction is L-seryl-tRNA(Sec) + selenophosphate + H(+) = L-selenocysteinyl-tRNA(Sec) + phosphate. Its pathway is aminoacyl-tRNA biosynthesis; selenocysteinyl-tRNA(Sec) biosynthesis; selenocysteinyl-tRNA(Sec) from L-seryl-tRNA(Sec) (bacterial route): step 1/1. Converts seryl-tRNA(Sec) to selenocysteinyl-tRNA(Sec) required for selenoprotein biosynthesis. The protein is L-seryl-tRNA(Sec) selenium transferase of Campylobacter concisus (strain 13826).